Consider the following 180-residue polypeptide: Large ribosomal subunit protein uL5 (180 aa).

The protein belongs to the universal ribosomal protein uL5 family. Part of the 50S ribosomal subunit; part of the 5S rRNA/L5/L18/L25 subcomplex. Contacts the 5S rRNA and the P site tRNA. Forms a bridge to the 30S subunit in the 70S ribosome.

In terms of biological role, this is one of the proteins that bind and probably mediate the attachment of the 5S RNA into the large ribosomal subunit, where it forms part of the central protuberance. In the 70S ribosome it contacts protein S13 of the 30S subunit (bridge B1b), connecting the 2 subunits; this bridge is implicated in subunit movement. Contacts the P site tRNA; the 5S rRNA and some of its associated proteins might help stabilize positioning of ribosome-bound tRNAs. The polypeptide is Large ribosomal subunit protein uL5 (Chlamydia caviae (strain ATCC VR-813 / DSM 19441 / 03DC25 / GPIC) (Chlamydophila caviae)).